Reading from the N-terminus, the 794-residue chain is Striatin-3 (794 aa).

An N-acetylmethionine modification is found at M1. A compositionally biased stretch (gly residues) spans 1-12 (MDELAGGGGGQG). The tract at residues 1–59 (MDELAGGGGGQGMAVPPRPQQGPGGNLSLPPGANGAPGGGGPPAAETAGPPAGPELSRP) is disordered. The caveolin-binding stretch occupies residues 70–78 (YIQHEWARF). Residues 76–135 (ARFEMERAHWEVERAELQARIAFLQGERKGQENLKKDLVRRIKMLEYALKQERAKYHKLK) adopt a coiled-coil conformation. Phosphothreonine is present on T149. The interval 164 to 181 (QNSQLTWKQGRQLLRQYL) is calmodulin-binding. A phosphoserine mark is found at S200, S212, S227, S255, and S332. The tract at residues 309-339 (EDGEGAGEARSSGDGTEWDKDDLSPTAEVWD) is disordered. 6 WD repeats span residues 475–514 (SHFD…PAKK), 528–567 (AHIG…VDPY), 581–620 (AHTD…PCIC), 676–715 (QSSN…MIHS), 718–757 (AHLD…CVQE), and 764–794 (KLDE…KVFV).

It belongs to the WD repeat striatin family. As to quaternary structure, tetramerizes. Part of the core of STRIPAK complexes composed of PP2A catalytic and scaffolding subunits, the striatins (PP2A regulatory subunits), the striatin-associated proteins MOB4, STRIP1 and STRIP2, PDCD10 and members of the STE20 kinases, such as STK24 and STK26. The STRIPAK complex can be extended by adapter proteins such as SLMAP:SIKE1 or CTTNBP2NL. Interacts with CDC42BPB.

Its subcellular location is the cytoplasm. The protein localises to the membrane. Functionally, calmodulin-binding scaffolding protein which is the center of the striatin-interacting phosphatase and kinase (STRIPAK) complexes. STRIPAK complexes have critical roles in protein (de)phosphorylation and are regulators of multiple signaling pathways including Hippo, MAPK, nuclear receptor and cytoskeleton remodeling. Different types of STRIPAK complexes are involved in a variety of biological processes such as cell growth, differentiation, apoptosis, metabolism and immune regulation. The chain is Striatin-3 (Strn3) from Rattus norvegicus (Rat).